The sequence spans 220 residues: Protein-methionine-sulfoxide reductase heme-binding subunit MsrQ (220 aa).

6 helical membrane-spanning segments follow: residues leucine 20–threonine 40, glutamate 52–isoleucine 72, alanine 86–aspartate 106, proline 122–asparagine 142, tryptophan 153–methionine 173, and valine 175–tryptophan 195.

The protein belongs to the MsrQ family. Heterodimer of a catalytic subunit (MsrP) and a heme-binding subunit (MsrQ). Requires FMN as cofactor. The cofactor is heme b.

The protein resides in the cell inner membrane. Part of the MsrPQ system that repairs oxidized periplasmic proteins containing methionine sulfoxide residues (Met-O), using respiratory chain electrons. Thus protects these proteins from oxidative-stress damage caused by reactive species of oxygen and chlorine generated by the host defense mechanisms. MsrPQ is essential for the maintenance of envelope integrity under bleach stress, rescuing a wide series of structurally unrelated periplasmic proteins from methionine oxidation. MsrQ provides electrons for reduction to the reductase catalytic subunit MsrP, using the quinone pool of the respiratory chain. The protein is Protein-methionine-sulfoxide reductase heme-binding subunit MsrQ of Brucella abortus (strain S19).